We begin with the raw amino-acid sequence, 308 residues long: Maspardin (308 aa).

The region spanning 87-159 (FCDGFRKLLD…NSFWLMPAFM (73 aa)) is the AB hydrolase-1 domain.

Belongs to the AB hydrolase superfamily. As to quaternary structure, interacts with CD4. Interacts with ALDH16A1.

The protein resides in the cytoplasm. Its function is as follows. May play a role as a negative regulatory factor in CD4-dependent T-cell activation. The chain is Maspardin (SPG21) from Macaca fascicularis (Crab-eating macaque).